The chain runs to 552 residues: Dihydroxy-acid dehydratase (552 aa).

Residue Asp78 coordinates Mg(2+). Cys119 provides a ligand contact to [2Fe-2S] cluster. Mg(2+)-binding residues include Asp120 and Lys121. Lys121 carries the post-translational modification N6-carboxylysine. Cys191 contributes to the [2Fe-2S] cluster binding site. Glu442 lines the Mg(2+) pocket. The active-site Proton acceptor is the Ser468.

It belongs to the IlvD/Edd family. As to quaternary structure, homodimer. It depends on [2Fe-2S] cluster as a cofactor. Mg(2+) is required as a cofactor.

It carries out the reaction (2R)-2,3-dihydroxy-3-methylbutanoate = 3-methyl-2-oxobutanoate + H2O. The enzyme catalyses (2R,3R)-2,3-dihydroxy-3-methylpentanoate = (S)-3-methyl-2-oxopentanoate + H2O. It participates in amino-acid biosynthesis; L-isoleucine biosynthesis; L-isoleucine from 2-oxobutanoate: step 3/4. It functions in the pathway amino-acid biosynthesis; L-valine biosynthesis; L-valine from pyruvate: step 3/4. Its function is as follows. Functions in the biosynthesis of branched-chain amino acids. Catalyzes the dehydration of (2R,3R)-2,3-dihydroxy-3-methylpentanoate (2,3-dihydroxy-3-methylvalerate) into 2-oxo-3-methylpentanoate (2-oxo-3-methylvalerate) and of (2R)-2,3-dihydroxy-3-methylbutanoate (2,3-dihydroxyisovalerate) into 2-oxo-3-methylbutanoate (2-oxoisovalerate), the penultimate precursor to L-isoleucine and L-valine, respectively. The chain is Dihydroxy-acid dehydratase from Clostridium botulinum (strain Alaska E43 / Type E3).